The primary structure comprises 161 residues: Large ribosomal subunit protein bL9 (161 aa).

The protein belongs to the bacterial ribosomal protein bL9 family.

In terms of biological role, binds to the 23S rRNA. The protein is Large ribosomal subunit protein bL9 of Blochmanniella floridana.